Consider the following 238-residue polypeptide: 1-(5-phosphoribosyl)-5-[(5-phosphoribosylamino)methylideneamino] imidazole-4-carboxamide isomerase (238 aa).

Residue Asp-8 is the Proton acceptor of the active site. Asp-129 serves as the catalytic Proton donor.

It belongs to the HisA/HisF family.

It localises to the cytoplasm. The catalysed reaction is 1-(5-phospho-beta-D-ribosyl)-5-[(5-phospho-beta-D-ribosylamino)methylideneamino]imidazole-4-carboxamide = 5-[(5-phospho-1-deoxy-D-ribulos-1-ylimino)methylamino]-1-(5-phospho-beta-D-ribosyl)imidazole-4-carboxamide. Its pathway is amino-acid biosynthesis; L-histidine biosynthesis; L-histidine from 5-phospho-alpha-D-ribose 1-diphosphate: step 4/9. The protein is 1-(5-phosphoribosyl)-5-[(5-phosphoribosylamino)methylideneamino] imidazole-4-carboxamide isomerase of Clostridium kluyveri (strain NBRC 12016).